The primary structure comprises 174 residues: Large ribosomal subunit protein uL6 (174 aa).

It belongs to the universal ribosomal protein uL6 family. As to quaternary structure, part of the 50S ribosomal subunit.

This protein binds to the 23S rRNA, and is important in its secondary structure. It is located near the subunit interface in the base of the L7/L12 stalk, and near the tRNA binding site of the peptidyltransferase center. The protein is Large ribosomal subunit protein uL6 of Stenotrophomonas maltophilia (strain R551-3).